A 596-amino-acid chain; its full sequence is Phosphoenolpyruvate carboxykinase [GTP] (596 aa).

Residues R77 and 205–207 (YGG) contribute to the substrate site. 2 residues coordinate Mn(2+): K214 and H234. S256 lines the substrate pocket. 257 to 262 (ACGKTN) contacts GTP. C258 is an active-site residue. D283 lines the Mn(2+) pocket. The segment at 362 to 388 (KKGSTEKAAHPNSRFTAPAKNNPAISP) is disordered. 373 to 375 (NSR) contributes to the substrate binding site. GTP-binding positions include R375, R406, and 499–502 (YGDN).

Belongs to the phosphoenolpyruvate carboxykinase [GTP] family. Monomer. Mn(2+) is required as a cofactor.

It is found in the cytoplasm. It carries out the reaction oxaloacetate + GTP = phosphoenolpyruvate + GDP + CO2. It functions in the pathway carbohydrate biosynthesis; gluconeogenesis. Functionally, catalyzes the conversion of oxaloacetate (OAA) to phosphoenolpyruvate (PEP), the rate-limiting step in the metabolic pathway that produces glucose from lactate and other precursors derived from the citric acid cycle. The polypeptide is Phosphoenolpyruvate carboxykinase [GTP] (Anaeromyxobacter dehalogenans (strain 2CP-1 / ATCC BAA-258)).